Here is a 591-residue protein sequence, read N- to C-terminus: Oligopeptide-binding protein OppA (591 aa).

The protein belongs to the bacterial solute-binding protein 5 family. The complex is composed of an ATP-binding protein (OppD), two transmembrane proteins (OppB and OppC) and a solute-binding protein (OppA).

The protein resides in the periplasm. Its function is as follows. Part of the ABC transporter complex OppABCD involved in the uptake of oligopeptides. Peptide-binding protein that shows broad specificity but a moderate preference for hydrophobic oligopeptides and those that are 6-16 amino acids long. The chain is Oligopeptide-binding protein OppA from Mycobacterium bovis (strain ATCC BAA-935 / AF2122/97).